The chain runs to 418 residues: MAEIKNYTLNFGPQHPAAHGVLRLVLELDGEVIQRADPHIGLLHRGTEKLAEHKTFIQALPYMDRLDYVSMMCNEHAYVMAIEKMLGVEAPLRAQYIRVMFDEITRILNHLMSLGSHALDVGAMAVFLYAFREREDLMDCYEAVSGARMHAAYYRPGGVYRDLPDTMAQYGETSKYRSDKELRAMNDARSGSLLDFIEDFTNRFPACVDEYETLLTDNRIWKQRLVGIGVVDPDRAKALGFTGPMLRGSGVAWDLRKTQPYEVYDLMDFDVPVGVNGDCYDRYLVRVAELRESNRIIRQCVEWLRNNPGPVMIENHKIAPPKREAMKSNMEELIHHFKLFTEGFHVPPGEAYAAVEHPKGEFGIYLVSDGANKPYRLKIRAPGFAHLQSLDEMSRGHMIADAVTIIGTQDIVFGEIDR.

The protein belongs to the complex I 49 kDa subunit family. As to quaternary structure, NDH-1 is composed of 14 different subunits. Subunits NuoB, C, D, E, F, and G constitute the peripheral sector of the complex.

It localises to the cell inner membrane. It carries out the reaction a quinone + NADH + 5 H(+)(in) = a quinol + NAD(+) + 4 H(+)(out). In terms of biological role, NDH-1 shuttles electrons from NADH, via FMN and iron-sulfur (Fe-S) centers, to quinones in the respiratory chain. The immediate electron acceptor for the enzyme in this species is believed to be ubiquinone. Couples the redox reaction to proton translocation (for every two electrons transferred, four hydrogen ions are translocated across the cytoplasmic membrane), and thus conserves the redox energy in a proton gradient. The protein is NADH-quinone oxidoreductase subunit D of Bordetella avium (strain 197N).